Consider the following 499-residue polypeptide: Probable cytosol aminopeptidase (499 aa).

Residues Lys263 and Asp268 each contribute to the Mn(2+) site. Lys275 is an active-site residue. Mn(2+) is bound by residues Asp286, Asp345, and Glu347. Arg349 is an active-site residue.

It belongs to the peptidase M17 family. It depends on Mn(2+) as a cofactor.

The protein resides in the cytoplasm. The enzyme catalyses Release of an N-terminal amino acid, Xaa-|-Yaa-, in which Xaa is preferably Leu, but may be other amino acids including Pro although not Arg or Lys, and Yaa may be Pro. Amino acid amides and methyl esters are also readily hydrolyzed, but rates on arylamides are exceedingly low.. It carries out the reaction Release of an N-terminal amino acid, preferentially leucine, but not glutamic or aspartic acids.. Presumably involved in the processing and regular turnover of intracellular proteins. Catalyzes the removal of unsubstituted N-terminal amino acids from various peptides. This chain is Probable cytosol aminopeptidase, found in Chlamydia trachomatis serovar A (strain ATCC VR-571B / DSM 19440 / HAR-13).